Here is a 519-residue protein sequence, read N- to C-terminus: Putative ATP-dependent RNA helicase L396 (519 aa).

A Helicase ATP-binding domain is found at 110–258; it reads IKGMEEGGGG…IINWYMGPIL (149 aa). Residue 123 to 130 coordinates ATP; sequence MGCGSGKT. The DEAH box motif lies at 211–214; the sequence is DEVH. A Helicase C-terminal domain is found at 317-457; sequence YLIQELFDMG…KQKYNIQKYY (141 aa).

This sequence belongs to the DEAD box helicase family. DEAH subfamily.

The catalysed reaction is ATP + H2O = ADP + phosphate + H(+). This Acanthamoeba polyphaga (Amoeba) protein is Putative ATP-dependent RNA helicase L396.